A 129-amino-acid polypeptide reads, in one-letter code: Replication initiation control protein YabA (129 aa).

Residues His-103, Cys-105, Cys-119, and Cys-122 each coordinate Zn(2+).

It belongs to the YabA family. Homotetramer. Interacts with both DnaA and DnaN, acting as a bridge between these two proteins. It depends on Zn(2+) as a cofactor.

The protein resides in the cytoplasm. The protein localises to the nucleoid. Involved in control of chromosome replication initiation. Inhibits the cooperative binding of DnaA to the oriC region, thus negatively regulating initiation of chromosome replication. Inhibits the ability of DnaA-ATP to form a helix on DNA; does not disassemble preformed DnaA-DNA helices. Decreases the residence time of DnaA on the chromosome at its binding sites (oriC, replication forks and promoter-binding sites). Tethers DnaA to the replication machinery via the DNA polymerase beta sliding clamp subunit (dnaN). Associates with oriC and other DnaA targets on the chromosome in a DnaA-dependent manner. The chain is Replication initiation control protein YabA from Listeria welshimeri serovar 6b (strain ATCC 35897 / DSM 20650 / CCUG 15529 / CIP 8149 / NCTC 11857 / SLCC 5334 / V8).